The chain runs to 418 residues: Serine hydroxymethyltransferase (418 aa).

Residues Leu121 and 125–127 (GHL) contribute to the (6S)-5,6,7,8-tetrahydrofolate site. Position 230 is an N6-(pyridoxal phosphate)lysine (Lys230). Residue 355–357 (SPF) participates in (6S)-5,6,7,8-tetrahydrofolate binding.

This sequence belongs to the SHMT family. Homodimer. Pyridoxal 5'-phosphate serves as cofactor.

It is found in the cytoplasm. The enzyme catalyses (6R)-5,10-methylene-5,6,7,8-tetrahydrofolate + glycine + H2O = (6S)-5,6,7,8-tetrahydrofolate + L-serine. The protein operates within one-carbon metabolism; tetrahydrofolate interconversion. It participates in amino-acid biosynthesis; glycine biosynthesis; glycine from L-serine: step 1/1. Catalyzes the reversible interconversion of serine and glycine with tetrahydrofolate (THF) serving as the one-carbon carrier. This reaction serves as the major source of one-carbon groups required for the biosynthesis of purines, thymidylate, methionine, and other important biomolecules. Also exhibits THF-independent aldolase activity toward beta-hydroxyamino acids, producing glycine and aldehydes, via a retro-aldol mechanism. This is Serine hydroxymethyltransferase from Streptococcus pyogenes serotype M49 (strain NZ131).